Here is a 122-residue protein sequence, read N- to C-terminus: Semaphorin-like protein A43 (122 aa).

Residues 1-122 (MIYLYTADNV…RIMYLFYEYH (122 aa)) form the Sema domain.

This sequence belongs to the semaphorin family.

In Homo sapiens (Human), this protein is Semaphorin-like protein A43 (A43R).